The chain runs to 726 residues: Catalase-peroxidase (726 aa).

The segment at M1–T33 is disordered. The segment at residues W105–Y226 is a cross-link (tryptophyl-tyrosyl-methioninium (Trp-Tyr) (with M-252)). H106 functions as the Proton acceptor in the catalytic mechanism. Positions Y226–M252 form a cross-link, tryptophyl-tyrosyl-methioninium (Tyr-Met) (with W-105). Position 267 (H267) interacts with heme b.

This sequence belongs to the peroxidase family. Peroxidase/catalase subfamily. In terms of assembly, homodimer or homotetramer. The cofactor is heme b. Formation of the three residue Trp-Tyr-Met cross-link is important for the catalase, but not the peroxidase activity of the enzyme.

It carries out the reaction H2O2 + AH2 = A + 2 H2O. The enzyme catalyses 2 H2O2 = O2 + 2 H2O. Its function is as follows. Bifunctional enzyme with both catalase and broad-spectrum peroxidase activity. This is Catalase-peroxidase from Escherichia coli O1:K1 / APEC.